Consider the following 347-residue polypeptide: Geranylgeranyl pyrophosphate synthase 7, chloroplastic (347 aa).

The transit peptide at 1–39 (MTTLNLSIFPSVKISSSASIPGFIKIQPFLLRRKLSTVL) directs the protein to the chloroplast. Isopentenyl diphosphate contacts are provided by lysine 95, arginine 98, and histidine 127. Mg(2+)-binding residues include aspartate 134 and aspartate 140. Arginine 145 lines the dimethylallyl diphosphate pocket. Residue arginine 146 participates in isopentenyl diphosphate binding. Dimethylallyl diphosphate contacts are provided by lysine 232, threonine 233, glutamine 270, lysine 287, and lysine 297.

It belongs to the FPP/GGPP synthase family. Monomer. The cofactor is Mg(2+).

It localises to the plastid. The protein localises to the chloroplast. It catalyses the reaction isopentenyl diphosphate + dimethylallyl diphosphate = (2E)-geranyl diphosphate + diphosphate. The catalysed reaction is isopentenyl diphosphate + (2E)-geranyl diphosphate = (2E,6E)-farnesyl diphosphate + diphosphate. It carries out the reaction isopentenyl diphosphate + (2E,6E)-farnesyl diphosphate = (2E,6E,10E)-geranylgeranyl diphosphate + diphosphate. The protein operates within isoprenoid biosynthesis; farnesyl diphosphate biosynthesis; farnesyl diphosphate from geranyl diphosphate and isopentenyl diphosphate: step 1/1. Its pathway is isoprenoid biosynthesis; geranyl diphosphate biosynthesis; geranyl diphosphate from dimethylallyl diphosphate and isopentenyl diphosphate: step 1/1. It functions in the pathway isoprenoid biosynthesis; geranylgeranyl diphosphate biosynthesis; geranylgeranyl diphosphate from farnesyl diphosphate and isopentenyl diphosphate: step 1/1. Functionally, catalyzes the trans-addition of the three molecules of IPP onto DMAPP to form geranylgeranyl pyrophosphate. The sequence is that of Geranylgeranyl pyrophosphate synthase 7, chloroplastic from Arabidopsis thaliana (Mouse-ear cress).